Reading from the N-terminus, the 361-residue chain is Phospho-N-acetylmuramoyl-pentapeptide-transferase (361 aa).

10 consecutive transmembrane segments (helical) span residues 25-45 (RGIL…PAVI), 73-93 (TMGG…WGDL), 98-118 (VWLV…DDWI), 139-159 (IFGL…AAIT), 168-188 (IALP…IVGF), 200-220 (GLAI…AYAS), 237-257 (AGEL…FLWF), 264-284 (VFMG…IAVI), 289-309 (MVLV…MIQV), and 339-359 (VIVR…ATLK).

The protein belongs to the glycosyltransferase 4 family. MraY subfamily. It depends on Mg(2+) as a cofactor.

The protein resides in the cell inner membrane. It catalyses the reaction UDP-N-acetyl-alpha-D-muramoyl-L-alanyl-gamma-D-glutamyl-meso-2,6-diaminopimeloyl-D-alanyl-D-alanine + di-trans,octa-cis-undecaprenyl phosphate = di-trans,octa-cis-undecaprenyl diphospho-N-acetyl-alpha-D-muramoyl-L-alanyl-D-glutamyl-meso-2,6-diaminopimeloyl-D-alanyl-D-alanine + UMP. It functions in the pathway cell wall biogenesis; peptidoglycan biosynthesis. In terms of biological role, catalyzes the initial step of the lipid cycle reactions in the biosynthesis of the cell wall peptidoglycan: transfers peptidoglycan precursor phospho-MurNAc-pentapeptide from UDP-MurNAc-pentapeptide onto the lipid carrier undecaprenyl phosphate, yielding undecaprenyl-pyrophosphoryl-MurNAc-pentapeptide, known as lipid I. The polypeptide is Phospho-N-acetylmuramoyl-pentapeptide-transferase (Xanthomonas axonopodis pv. citri (strain 306)).